The following is a 597-amino-acid chain: Elongation factor 4 (597 aa).

The tr-type G domain occupies 2–184; the sequence is DHIRNFSIIA…ALIAKVPPPK (183 aa). GTP contacts are provided by residues 14–19 and 131–134; these read DHGKST and NKID.

The protein belongs to the TRAFAC class translation factor GTPase superfamily. Classic translation factor GTPase family. LepA subfamily.

It is found in the cell inner membrane. It carries out the reaction GTP + H2O = GDP + phosphate + H(+). In terms of biological role, required for accurate and efficient protein synthesis under certain stress conditions. May act as a fidelity factor of the translation reaction, by catalyzing a one-codon backward translocation of tRNAs on improperly translocated ribosomes. Back-translocation proceeds from a post-translocation (POST) complex to a pre-translocation (PRE) complex, thus giving elongation factor G a second chance to translocate the tRNAs correctly. Binds to ribosomes in a GTP-dependent manner. The polypeptide is Elongation factor 4 (Cupriavidus pinatubonensis (strain JMP 134 / LMG 1197) (Cupriavidus necator (strain JMP 134))).